The chain runs to 720 residues: Putative glutamine--fructose-6-phosphate aminotransferase [isomerizing] (720 aa).

The active-site Nucleophile; for GATase activity is Cys-2. Residues 2–321 form the Glutamine amidotransferase type-2 domain; it reads CGIFGYCNFL…DNDTAHIYDG (320 aa). The span at 266–280 shows a compositional bias: polar residues; it reads STTSTFNHGSSTETP. Positions 266–285 are disordered; the sequence is STTSTFNHGSSTETPAENGL. 2 consecutive SIS domains span residues 393-532 and 565-710; these read WLTE…DLVS and CDKK…VDLP.

It catalyses the reaction D-fructose 6-phosphate + L-glutamine = D-glucosamine 6-phosphate + L-glutamate. Its pathway is nucleotide-sugar biosynthesis; UDP-N-acetyl-alpha-D-glucosamine biosynthesis; alpha-D-glucosamine 6-phosphate from D-fructose 6-phosphate: step 1/1. Involved in amino sugar synthesis (formation of chitin, supplies the amino sugars of asparagine-linked oligosaccharides of glycoproteins). This is Putative glutamine--fructose-6-phosphate aminotransferase [isomerizing] from Saccharomyces cerevisiae (strain JAY291) (Baker's yeast).